The primary structure comprises 427 residues: MSNFSEVFARAQKTIPGGVNSPVRAFKAVGGEPVFIDHAKGAYVYDIHGKRYVDYVLSWGPMLLGHGDDDVLDAVRAKLDKGLSFGAPTEIETELAEKICNIMPGMDKVRFVNSGTEATMSAIRLARGYTGRDKIVKFEGCYHGHSDSLLIKAGSGALTLGVPSSPGVPACLAEHTITLTYNNIEQVRQLFRDRGNEIACIIVEPVAGNMNCIPPEPGFLQALREVCTQADALLIFDEVMTGFRLGLSGAQGYYQVQPDITTLGKVIGGGMPVGAFGGSERIMDFIAPVGPVYQAGTLSGNPVAMAAGLKTLEKISAEGFYQPIFDKTAALCRNLESAAKEAGIGFTTNYVGSMWGGFFTEEEKISNYQQVMACNTERFNRFFHGMLDEGVYLAPASYEAGFMSVSHSDEDIDFTVNAARKVFANIK.

At Lys265 the chain carries N6-(pyridoxal phosphate)lysine.

Belongs to the class-III pyridoxal-phosphate-dependent aminotransferase family. HemL subfamily. Homodimer. Requires pyridoxal 5'-phosphate as cofactor.

The protein localises to the cytoplasm. The enzyme catalyses (S)-4-amino-5-oxopentanoate = 5-aminolevulinate. Its pathway is porphyrin-containing compound metabolism; protoporphyrin-IX biosynthesis; 5-aminolevulinate from L-glutamyl-tRNA(Glu): step 2/2. The protein is Glutamate-1-semialdehyde 2,1-aminomutase of Teredinibacter turnerae (strain ATCC 39867 / T7901).